Here is a 248-residue protein sequence, read N- to C-terminus: MTTLFISDLHLDPSRPEITDLFLRFLREQAPGADALYILGDLFEAWIGDDTPSPAADAVADALKVLSDSGVPVYFIRGNRDFLLGEDYARRAGLRILPDPCMIDLYGRPVLLQHGDLLCTDDIPYQQFRAQTRDPAFQAQFLSQPLAARIAFAQKAREASQARQSEMKQGDRAQFETVTDVAPSEVDATFARHGVDTMIHGHTHRPAIHSLQAGGRACTRIVLGDWYEQGSVLRVDAGGWSLDTLARE.

Asp-8, His-10, Asp-41, Asn-79, and His-114 together coordinate Mn(2+). 79–80 (NR) lines the substrate pocket. Residues Asp-122, Ser-160, Asp-171, Gln-174, and His-202 each coordinate substrate. Residues His-202 and His-204 each contribute to the Mn(2+) site.

This sequence belongs to the LpxH family. The cofactor is Mn(2+).

The protein localises to the cell inner membrane. The enzyme catalyses UDP-2-N,3-O-bis[(3R)-3-hydroxytetradecanoyl]-alpha-D-glucosamine + H2O = 2-N,3-O-bis[(3R)-3-hydroxytetradecanoyl]-alpha-D-glucosaminyl 1-phosphate + UMP + 2 H(+). It functions in the pathway glycolipid biosynthesis; lipid IV(A) biosynthesis; lipid IV(A) from (3R)-3-hydroxytetradecanoyl-[acyl-carrier-protein] and UDP-N-acetyl-alpha-D-glucosamine: step 4/6. Its function is as follows. Hydrolyzes the pyrophosphate bond of UDP-2,3-diacylglucosamine to yield 2,3-diacylglucosamine 1-phosphate (lipid X) and UMP by catalyzing the attack of water at the alpha-P atom. Involved in the biosynthesis of lipid A, a phosphorylated glycolipid that anchors the lipopolysaccharide to the outer membrane of the cell. This is UDP-2,3-diacylglucosamine hydrolase from Stenotrophomonas maltophilia (strain K279a).